A 157-amino-acid chain; its full sequence is SsrA-binding protein (157 aa).

Positions 130–157 (HDKRQDMAKKDSQRRIQKELGQRQKGME) are disordered. Residues 132-157 (KRQDMAKKDSQRRIQKELGQRQKGME) show a composition bias toward basic and acidic residues.

This sequence belongs to the SmpB family.

It localises to the cytoplasm. Its function is as follows. Required for rescue of stalled ribosomes mediated by trans-translation. Binds to transfer-messenger RNA (tmRNA), required for stable association of tmRNA with ribosomes. tmRNA and SmpB together mimic tRNA shape, replacing the anticodon stem-loop with SmpB. tmRNA is encoded by the ssrA gene; the 2 termini fold to resemble tRNA(Ala) and it encodes a 'tag peptide', a short internal open reading frame. During trans-translation Ala-aminoacylated tmRNA acts like a tRNA, entering the A-site of stalled ribosomes, displacing the stalled mRNA. The ribosome then switches to translate the ORF on the tmRNA; the nascent peptide is terminated with the 'tag peptide' encoded by the tmRNA and targeted for degradation. The ribosome is freed to recommence translation, which seems to be the essential function of trans-translation. The polypeptide is SsrA-binding protein (Alkaliphilus metalliredigens (strain QYMF)).